The primary structure comprises 374 residues: Cathepsin W (374 aa).

Positions M1–G21 are cleaved as a signal peptide. A propeptide spanning residues I22–S127 is cleaved from the precursor. 2 disulfide bridges follow: C150-C191 and C184-C226. Residue C153 is part of the active site. The N-linked (GlcNAc...) asparagine glycan is linked to N205. Residues H291 and N329 contribute to the active site. The N-linked (GlcNAc...) asparagine glycan is linked to N347.

It belongs to the peptidase C1 family.

The protein resides in the endoplasmic reticulum. In terms of biological role, may have a specific function in the mechanism or regulation of T-cell cytolytic activity. The sequence is that of Cathepsin W (CTSW) from Felis catus (Cat).